Consider the following 340-residue polypeptide: MNVFEPRLSSWLENAGDDDDVVLSSRIRLARNLKDEQFPIYEQKEEIVDKIAGAFDDNFTLIKMNQISHLEKALLVEKHLISPYMMNKSEYGAVLLNEEENVSIMLNEEDHLRIQCMTPGLRLFDALEAALQIDGYVEEKLSYAFDKQFGYLTSCVTNIGTGMRASVMVHLPGLVTTKRIKSVIEAIRSLGFVVRGIYGEGSLPASSIFQVSNQVTLGKTETEIVEDLTQVMEQIIMQERIARTTLKQKFHIALEDRVFRSYGLLTNCRIISMREASDAISDVRLGVELGFFEHISRQKMNELVLFSQPAFLRREAGRDMDELEEKVIRAKVIREILGDK.

The Phosphagen kinase C-terminal domain maps to 21–242; it reads VVLSSRIRLA…EQIIMQERIA (222 aa). ATP is bound by residues 24–28, His79, Arg113, 164–168, and 195–200; these read SSRIR, RASVM, and RGIYGE.

Belongs to the ATP:guanido phosphotransferase family.

The enzyme catalyses L-arginyl-[protein] + ATP = N(omega)-phospho-L-arginyl-[protein] + ADP + H(+). Its function is as follows. Catalyzes the specific phosphorylation of arginine residues in proteins. This is Protein-arginine kinase from Listeria monocytogenes serotype 4a (strain HCC23).